The primary structure comprises 462 residues: Exodeoxyribonuclease 7 large subunit (462 aa).

It belongs to the XseA family. As to quaternary structure, heterooligomer composed of large and small subunits.

The protein resides in the cytoplasm. It carries out the reaction Exonucleolytic cleavage in either 5'- to 3'- or 3'- to 5'-direction to yield nucleoside 5'-phosphates.. Functionally, bidirectionally degrades single-stranded DNA into large acid-insoluble oligonucleotides, which are then degraded further into small acid-soluble oligonucleotides. This is Exodeoxyribonuclease 7 large subunit from Proteus mirabilis (strain HI4320).